A 99-amino-acid polypeptide reads, in one-letter code: Putative protein adenylyltransferase MJ0141 (99 aa).

Residues 29-43 carry the GSX(10)DXD motif motif; sequence GSYARGDYDEESDVD. Positions 41 and 43 each coordinate Mg(2+).

Belongs to the MntA antitoxin family. The cofactor is Mg(2+).

The catalysed reaction is L-tyrosyl-[protein] + ATP = O-(5'-adenylyl)-L-tyrosyl-[protein] + diphosphate. It carries out the reaction O-(5'-adenylyl)-L-tyrosyl-[protein] + ATP = O-[5'-(adenylyl-(5'-&gt;3')-adenylyl)]-L-tyrosyl-[protein] + diphosphate. Its function is as follows. Putative antitoxin component of a putative type VII toxin-antitoxin (TA) system. Its cognate toxin might be MF0142, which it might AMPylate. In Methanocaldococcus jannaschii (strain ATCC 43067 / DSM 2661 / JAL-1 / JCM 10045 / NBRC 100440) (Methanococcus jannaschii), this protein is Putative protein adenylyltransferase MJ0141.